The primary structure comprises 280 residues: Protein scylla (280 aa).

The segment at 39–96 (LMSKKAKTTTGGSSNGSNATATSTTTSTSSSIKHKQPAGSSNNNVGQSQSKKTKPSGS) is disordered. Low complexity-rich tracts occupy residues 46–69 (TTTGGSSNGSNATATSTTTSTSSS) and 77–96 (GSSNNNVGQSQSKKTKPSGS).

This sequence belongs to the DDIT4 family.

Its subcellular location is the cytoplasm. Its function is as follows. Inhibits cell growth by regulating the Tor pathway upstream of the Tsc1-Tsc2 complex and downstream of Akt1. Acts as a cell death activator during head development. The polypeptide is Protein scylla (scyl) (Drosophila melanogaster (Fruit fly)).